Here is a 566-residue protein sequence, read N- to C-terminus: Sister chromatid cohesion protein 1 (566 aa).

The residue at position 161 (Ser161) is a Phosphoserine. Position 175 is a phosphoserine; by CDC5 (Ser175). Lys210 carries the post-translational modification N6-acetyllysine; by ECO1. Ser263 carries the phosphoserine; by CDC5 modification. Position 307 is a phosphoserine (Ser307). Positions 325–356 (SIQIDEETENSESIASSNTYKEERSNNLLTPQ) are disordered. A Phosphothreonine modification is found at Thr354.

It belongs to the rad21 family. As to quaternary structure, interacts directly with IRR1/SCC3 in cohesin complex. Cohesin complexes are composed of the SMC1 and SMC3 heterodimer attached via their hinge domain, MCD1/SCC1 which link them, and IRR1, which interacts with MCD1. The cohesin complex also interacts with SCC2, which is required for its association with chromosomes. Cleaved by ESP1 at the onset of anaphase. Post-translationally, phosphorylated by CDC5/Polo-like kinase at the onset of anaphase. Phosphorylation takes places at proximity to cleavage sites and is required for an efficient cleavage by ESP1. In terms of processing, acetylated by ECO1.

The protein localises to the nucleus. It localises to the chromosome. Its subcellular location is the centromere. Its function is as follows. Cleavable component of the cohesin complex involved in chromosome cohesion during cell cycle. The cohesin complex is required for the cohesion of sister chromatids after DNA replication. The cohesin complex apparently forms a large proteinaceous ring within which sister chromatids can be trapped. At metaphase-anaphase transition, this protein is cleaved by ESP1 and dissociates from chromatin, allowing sister chromatids to segregate. In Saccharomyces cerevisiae (strain ATCC 204508 / S288c) (Baker's yeast), this protein is Sister chromatid cohesion protein 1 (MCD1).